We begin with the raw amino-acid sequence, 1723 residues long: Homeobox protein 5 (1723 aa).

A compositionally biased stretch (low complexity) spans 36–50; it reads QLQQPQHQPQHYQQQ. Disordered regions lie at residues 36–425, 440–522, 543–756, 878–978, 1080–1214, 1226–1264, 1345–1399, 1456–1498, and 1513–1547; these read QLQQ…APGT, SSSP…QLQQ, ENIT…PPLT, GTIV…TGSL, IFNN…SENN, VSLG…NQQQ, IVNN…TQTS, QQQQ…STTT, and HNQQ…SRRK. A compositionally biased stretch (polar residues) spans 51–72; it reads DSFVSPNLDNNNPQIHVQSNNY. Low complexity-rich tracts occupy residues 73–107 and 114–212; these read NQNG…NNSS and NNSS…NNNN. 2 stretches are compositionally biased toward polar residues: residues 223-237 and 244-257; these read SQPT…QHNP and GQHN…MVMD. Low complexity-rich tracts occupy residues 258–284 and 291–350; these read NNNN…NSNS and NNNN…NNNN. The stretch at 300-351 forms a coiled coil; it reads YNNNNNNNNNNNSNSNNNNNNNNNNNNNNNNNNNNNNNNNNNNNSNNNNNNQ. The segment covering 351 to 369 has biased composition (polar residues); the sequence is QFSQSYDSTLGNNRFSSMM. Composition is skewed to low complexity over residues 371-421 and 440-465; these read QPIQ…LIGS and SSSP…LSSS. The segment covering 483–510 has biased composition (polar residues); sequence MSSITNTNLKSTQASTLKESKRSNSSPN. Composition is skewed to low complexity over residues 511-522, 544-571, and 581-593; these read LKKQMQLQQLQQ, NITN…ITNN, and NSNN…DSIN. Residues 632-655 are compositionally biased toward polar residues; that stretch reads HISTTQQSPSLNGSTGGSMLTPTM. The span at 660–669 shows a compositional bias: gly residues; it reads LSGGGSGGGF. The span at 673-685 shows a compositional bias: polar residues; that stretch reads ISPTGTTSNKDLQ. Low complexity-rich tracts occupy residues 686–699, 710–727, and 734–745; these read SSPS…SMSM, SMSS…SNGL, and SNNMNSSGGIPT. Residues 746–755 show a composition bias toward pro residues; that stretch reads PSTPTSPPPL. Positions 882 to 928 are enriched in low complexity; the sequence is NPTNVNNNNINNNNNNNNNNNNNNNNNNNNNNNNNNNNTTTTTTTTT. Over residues 929-945 the composition is skewed to polar residues; the sequence is SANTVQSGTTSNSNLVF. 2 stretches are compositionally biased toward low complexity: residues 946–977 and 1082–1146; these read QQTS…STGS and NNNN…SINS. 2 stretches are compositionally biased toward polar residues: residues 1147-1159 and 1176-1187; these read PRPS…NSSG and DISTGLMASSDQ. The stretch at 1193–1270 forms a coiled coil; the sequence is QQQQHQQLVN…NQQQILHQQL (78 aa). Low complexity predominate over residues 1194–1214; the sequence is QQQHQQLVNNNNNNMNNSENN. The span at 1226 to 1242 shows a compositional bias: polar residues; sequence VSLGSLPTNTPSSMEIE. Low complexity-rich tracts occupy residues 1243–1264, 1347–1384, 1456–1480, 1487–1498, and 1518–1528; these read QQQQ…NQQQ, NNQN…TNTP, QQQQ…RSSP, SNTNTTTTSTTT, and SPISPRSPRSP. Residues 1431-1464 adopt a coiled-coil conformation; sequence VLQQQQQQQQQQQQQQQQQQQQQQQQQQQQQQET. Over residues 1529–1543 the composition is skewed to polar residues; it reads HGTSGDYNDGSQSPS. Positions 1543–1607 form a DNA-binding region, homeobox; the sequence is SSRRKNRFTD…NKRARSRPSP (65 aa). The 36-residue stretch at 1553 to 1588 folds into the EF-hand domain; sequence FQIKRMNDCFENLDKNNNGKFTSEEICQIATELGLT. Disordered stretches follow at residues 1598-1625 and 1661-1723; these read NKRA…GNNS and LHQQ…TINE. Over residues 1612 to 1625 the composition is skewed to low complexity; sequence TNPLTSSTNNGNNS. Residues 1632-1702 adopt a coiled-coil conformation; that stretch reads LQQQHLQQVQ…NNNNNNNNNN (71 aa). The span at 1665–1675 shows a compositional bias: polar residues; that stretch reads SANTTPQLNSM. Residues 1676 to 1723 are compositionally biased toward low complexity; that stretch reads NPNSINYNNNNNNNNNNNNNNNNNNNNNNNNNNNNNNIINNNITTINE.

The protein localises to the nucleus. Putative transcription factor. This chain is Homeobox protein 5 (hbx5-1), found in Dictyostelium discoideum (Social amoeba).